The chain runs to 417 residues: Origin of replication complex subunit 4 (417 aa).

Residue 59–66 participates in ATP binding; sequence GPRGSGKA.

It belongs to the ORC4 family. In terms of assembly, component of the origin recognition complex (ORC) composed of at least ORC1 (ORC1A or ORC1B), ORC2, ORC3, ORC4, ORC5 and ORC6. ORC is regulated in a cell-cycle and development dependent manner. It is sequentially assembled at the exit from anaphase of mitosis and disassembled as cells enter S phase. Interacts directly with ORC1A, ORC2, ORC3, ORC5 and ORC6. As to expression, follow a cell-cycle regulation with a peak at the G1/S-phase. Isoform AtORC4a is expressed at low levels ubiquitously. Isoform AtORC4b is mostly expressed in siliques, flowers and flower buds, and, to a lower exent, in roots, leaves and stems.

The protein localises to the nucleus. Its function is as follows. Component of the origin recognition complex (ORC) that binds origins of replication. DNA-binding is ATP-dependent. The specific DNA sequences that define origins of replication have not been identified yet. ORC is required to assemble the pre-replication complex necessary to initiate DNA replication. This Arabidopsis thaliana (Mouse-ear cress) protein is Origin of replication complex subunit 4.